A 348-amino-acid polypeptide reads, in one-letter code: tRNA N6-adenosine threonylcarbamoyltransferase (348 aa).

2 residues coordinate Fe cation: H111 and H115. Substrate-binding positions include 134–138, D167, G180, and N276; that span reads LVSGG. D304 is a Fe cation binding site.

The protein belongs to the KAE1 / TsaD family. Fe(2+) is required as a cofactor.

Its subcellular location is the cytoplasm. The enzyme catalyses L-threonylcarbamoyladenylate + adenosine(37) in tRNA = N(6)-L-threonylcarbamoyladenosine(37) in tRNA + AMP + H(+). In terms of biological role, required for the formation of a threonylcarbamoyl group on adenosine at position 37 (t(6)A37) in tRNAs that read codons beginning with adenine. Is involved in the transfer of the threonylcarbamoyl moiety of threonylcarbamoyl-AMP (TC-AMP) to the N6 group of A37, together with TsaE and TsaB. TsaD likely plays a direct catalytic role in this reaction. In Bordetella petrii (strain ATCC BAA-461 / DSM 12804 / CCUG 43448), this protein is tRNA N6-adenosine threonylcarbamoyltransferase.